A 61-amino-acid polypeptide reads, in one-letter code: Metallothionein-1M (61 aa).

The segment at 1–29 (MDPNCSCTTGVSCACTGSCTCKECKCTSC) is beta. Residues Cys-5, Cys-7, Cys-13, Cys-15, Cys-19, Cys-21, Cys-24, Cys-26, Cys-29, Cys-33, Cys-34, Cys-36, Cys-37, Cys-41, Cys-44, Cys-48, Cys-50, Cys-57, Cys-59, and Cys-60 each coordinate a divalent metal cation. The interval 30 to 61 (KKSCCSCCPVGCAKCAHGCVCKGTLENCSCCA) is alpha.

The protein belongs to the metallothionein superfamily. Type 1 family. In terms of assembly, monomer.

In terms of biological role, metallothioneins have a high content of cysteine residues that bind various heavy metals; these proteins are transcriptionally regulated by both heavy metals and glucocorticoids. In Homo sapiens (Human), this protein is Metallothionein-1M (MT1M).